The chain runs to 145 residues: Ribonuclease H (145 aa).

An RNase H type-1 domain is found at 2–143 (SKKEVAIYTD…ADSLARKAII (142 aa)). The Mg(2+) site is built by aspartate 11, glutamate 49, aspartate 71, and aspartate 135.

This sequence belongs to the RNase H family. In terms of assembly, monomer. The cofactor is Mg(2+).

The protein localises to the cytoplasm. The catalysed reaction is Endonucleolytic cleavage to 5'-phosphomonoester.. Its function is as follows. Endonuclease that specifically degrades the RNA of RNA-DNA hybrids. The sequence is that of Ribonuclease H from Wolbachia sp. subsp. Drosophila simulans (strain wRi).